Consider the following 80-residue polypeptide: Large ribosomal subunit protein eL20 (80 aa).

The protein belongs to the eukaryotic ribosomal protein eL20 family. In terms of assembly, part of the 50S ribosomal subunit. Binds 23S rRNA.

The chain is Large ribosomal subunit protein eL20 from Methanopyrus kandleri (strain AV19 / DSM 6324 / JCM 9639 / NBRC 100938).